The following is a 422-amino-acid chain: 3-phosphoshikimate 1-carboxyvinyltransferase (422 aa).

3-phosphoshikimate-binding residues include Lys20, Ser21, and Arg25. Residue Lys20 participates in phosphoenolpyruvate binding. 2 residues coordinate phosphoenolpyruvate: Gly91 and Arg119. 3-phosphoshikimate-binding residues include Thr163, Ser164, Gln165, Asp305, Gln328, and Lys332. Phosphoenolpyruvate is bound at residue Gln165. Asp305 acts as the Proton acceptor in catalysis. Phosphoenolpyruvate-binding residues include Arg336 and Arg377.

It belongs to the EPSP synthase family. As to quaternary structure, monomer.

It localises to the cytoplasm. The catalysed reaction is 3-phosphoshikimate + phosphoenolpyruvate = 5-O-(1-carboxyvinyl)-3-phosphoshikimate + phosphate. It participates in metabolic intermediate biosynthesis; chorismate biosynthesis; chorismate from D-erythrose 4-phosphate and phosphoenolpyruvate: step 6/7. In terms of biological role, catalyzes the transfer of the enolpyruvyl moiety of phosphoenolpyruvate (PEP) to the 5-hydroxyl of shikimate-3-phosphate (S3P) to produce enolpyruvyl shikimate-3-phosphate and inorganic phosphate. The protein is 3-phosphoshikimate 1-carboxyvinyltransferase of Ruminiclostridium cellulolyticum (strain ATCC 35319 / DSM 5812 / JCM 6584 / H10) (Clostridium cellulolyticum).